The following is a 549-amino-acid chain: Undecaprenyl phosphate-alpha-4-amino-4-deoxy-L-arabinose arabinosyl transferase (549 aa).

The next 12 membrane-spanning stretches (helical) occupy residues 9-29 (LLLI…GLWI), 80-100 (LFGV…LAYL), 112-132 (SLAC…SGYA), 136-156 (PQFT…LDAG), 176-196 (FLTK…PYML), 204-224 (LLGY…PWAL), 256-276 (PWWF…GLLP), 288-308 (QPPV…FSLS), 312-332 (LPTY…HALV), 346-366 (NGLL…YLQL), 376-396 (FELF…LAQW), and 402-422 (AWAA…AAMP).

Belongs to the glycosyltransferase 83 family.

The protein resides in the cell inner membrane. It carries out the reaction 4-amino-4-deoxy-alpha-L-arabinopyranosyl di-trans,octa-cis-undecaprenyl phosphate + lipid IVA = lipid IIA + di-trans,octa-cis-undecaprenyl phosphate.. It functions in the pathway lipopolysaccharide metabolism; 4-amino-4-deoxy-beta-L-arabinose-lipid A biosynthesis. Catalyzes the transfer of the L-Ara4N moiety of the glycolipid undecaprenyl phosphate-alpha-L-Ara4N to lipid A. The modified arabinose is attached to lipid A and is required for resistance to polymyxin and cationic antimicrobial peptides. This is Undecaprenyl phosphate-alpha-4-amino-4-deoxy-L-arabinose arabinosyl transferase from Pseudomonas paraeruginosa (strain DSM 24068 / PA7) (Pseudomonas aeruginosa (strain PA7)).